Consider the following 144-residue polypeptide: Large ribosomal subunit protein uL15 (144 aa).

The tract at residues 1 to 53 (MRLNTLSPAVGAKSAPKRVGRGIGSGLGKTAGRGHKGQKSRSGGGVRPGFEGG) is disordered. 2 stretches are compositionally biased toward gly residues: residues 21-31 (RGIGSGLGKTA) and 42-52 (SGGGVRPGFEG).

It belongs to the universal ribosomal protein uL15 family. As to quaternary structure, part of the 50S ribosomal subunit.

In terms of biological role, binds to the 23S rRNA. This chain is Large ribosomal subunit protein uL15, found in Shewanella amazonensis (strain ATCC BAA-1098 / SB2B).